We begin with the raw amino-acid sequence, 1323 residues long: Clustered mitochondria protein homolog (1323 aa).

Residues Lys-103–Val-141 form a TPR 1 repeat. Positions Leu-149 to Glu-186 are disordered. The span at Gln-150–Glu-186 shows a compositional bias: basic and acidic residues. The Clu domain occupies Phe-351–Ile-608. One copy of the TPR 2 repeat lies at Cys-530–Pro-563. Basic and acidic residues predominate over residues Asn-764 to Asp-801. Positions Asn-764–Asn-808 are disordered. 4 TPR repeats span residues Leu-1042–Ala-1076, Ile-1099–Val-1132, Val-1141–Leu-1174, and Gly-1183–Phe-1216. The disordered stretch occupies residues Lys-1250 to Lys-1323. Over residues Pro-1308 to Lys-1323 the composition is skewed to basic residues.

This sequence belongs to the CLU family. In terms of assembly, may associate with the eukaryotic translation initiation factor 3 (eIF-3) complex.

Its subcellular location is the cytoplasm. MRNA-binding protein involved in proper cytoplasmic distribution of mitochondria. This chain is Clustered mitochondria protein homolog, found in Debaryomyces hansenii (strain ATCC 36239 / CBS 767 / BCRC 21394 / JCM 1990 / NBRC 0083 / IGC 2968) (Yeast).